The primary structure comprises 228 residues: Phosphatidylserine decarboxylase proenzyme (228 aa).

Serine 197 serves as the catalytic Schiff-base intermediate with substrate; via pyruvic acid. Serine 197 is modified (pyruvic acid (Ser); by autocatalysis).

This sequence belongs to the phosphatidylserine decarboxylase family. PSD-A subfamily. In terms of assembly, heterodimer of a large membrane-associated beta subunit and a small pyruvoyl-containing alpha subunit. Requires pyruvate as cofactor. Is synthesized initially as an inactive proenzyme. Formation of the active enzyme involves a self-maturation process in which the active site pyruvoyl group is generated from an internal serine residue via an autocatalytic post-translational modification. Two non-identical subunits are generated from the proenzyme in this reaction, and the pyruvate is formed at the N-terminus of the alpha chain, which is derived from the carboxyl end of the proenzyme. The post-translation cleavage follows an unusual pathway, termed non-hydrolytic serinolysis, in which the side chain hydroxyl group of the serine supplies its oxygen atom to form the C-terminus of the beta chain, while the remainder of the serine residue undergoes an oxidative deamination to produce ammonia and the pyruvoyl prosthetic group on the alpha chain.

It is found in the cell membrane. The catalysed reaction is a 1,2-diacyl-sn-glycero-3-phospho-L-serine + H(+) = a 1,2-diacyl-sn-glycero-3-phosphoethanolamine + CO2. It participates in phospholipid metabolism; phosphatidylethanolamine biosynthesis; phosphatidylethanolamine from CDP-diacylglycerol: step 2/2. Functionally, catalyzes the formation of phosphatidylethanolamine (PtdEtn) from phosphatidylserine (PtdSer). This is Phosphatidylserine decarboxylase proenzyme from Bacteroides fragilis (strain ATCC 25285 / DSM 2151 / CCUG 4856 / JCM 11019 / LMG 10263 / NCTC 9343 / Onslow / VPI 2553 / EN-2).